A 327-amino-acid chain; its full sequence is Serpentine receptor class alpha-12 (327 aa).

The Extracellular portion of the chain corresponds to 1-18 (MGCASEIQAEIFTSFGQL). The helical transmembrane segment at 19-39 (FYASFQTILFLATIIGSLLAI) threads the bilayer. The Cytoplasmic portion of the chain corresponds to 40–53 (FELCKKTTVPDSTR). A helical transmembrane segment spans residues 54–74 (VLLIGSLFFANAHEFAYFTAP). Over 75 to 98 (LKVFQLNIFNTNTSCYPLISTRDC) the chain is Extracellular. Residues 99 to 119 (IPTTTVLAMGISGNMLIQSAL) form a helical membrane-spanning segment. At 120–138 (SIDRLLATIFPFSYSRMRA) the chain is on the cytoplasmic side. Residues 139-159 (LPGFVLLIMVLIPAMFTYSWI) form a helical membrane-spanning segment. The Extracellular segment spans residues 160 to 185 (RLDIVLDDYQMFCSQWSANISTRANT). A helical membrane pass occupies residues 186 to 206 (FLEICSYLTVAHIIINCLIIL). Topologically, residues 207 to 234 (RNRAIEKRCRFDVTQRYLTSENLKTTQA) are cytoplasmic. Residues 235–255 (ICYLSIAQFLAMFMYSGGVLL) form a helical membrane-spanning segment. Topologically, residues 256–270 (MRKNRENIPTLIYFN) are extracellular. A helical membrane pass occupies residues 271–291 (VIVWVYAPPYACVSLAPLILF). At 292–327 (SLWNLKKQRHIQIKSVQSAQKETQDDYIRKLQKSWK) the chain is on the cytoplasmic side.

The protein belongs to the nematode receptor-like protein sra family. As to expression, expressed in neurons RIF/RIG and PVT.

The protein localises to the membrane. In Caenorhabditis elegans, this protein is Serpentine receptor class alpha-12 (sra-12).